The primary structure comprises 317 residues: MFQPLSSKPSFPHRHLLGIAGLSAQDLTILLDLAEEAIEVSRQVEKKRTSLRGRTLINLFFEASTRTQSSFELAGKRLGADVMNMSVATSSVKKGETLLDTAMTLNAMRPDIIVVRHAQAGAVHLLAREVDCSVVNAGDGAHEHPTQALLDALTIRRNKGRIEGLIVAICGDILHSRVARSNILSLSALGARVRVIGPSTLLPTGIEQMGVEVFRDMREGLVGADIVMMLRLQRERMDGGFIPSLKEYFRFYGLDEEKLALARPDALVMHPGPMNRGVEIASRVADGPQSRIREQVEMGVAVRMAVLEALSQHLPNG.

Carbamoyl phosphate contacts are provided by arginine 66 and threonine 67. Lysine 94 serves as a coordination point for L-aspartate. Carbamoyl phosphate-binding residues include arginine 116, histidine 144, and glutamine 147. L-aspartate is bound by residues arginine 177 and arginine 231. Residues glycine 272 and proline 273 each coordinate carbamoyl phosphate.

The protein belongs to the aspartate/ornithine carbamoyltransferase superfamily. ATCase family. As to quaternary structure, heterododecamer (2C3:3R2) of six catalytic PyrB chains organized as two trimers (C3), and six regulatory PyrI chains organized as three dimers (R2).

It catalyses the reaction carbamoyl phosphate + L-aspartate = N-carbamoyl-L-aspartate + phosphate + H(+). It functions in the pathway pyrimidine metabolism; UMP biosynthesis via de novo pathway; (S)-dihydroorotate from bicarbonate: step 2/3. Functionally, catalyzes the condensation of carbamoyl phosphate and aspartate to form carbamoyl aspartate and inorganic phosphate, the committed step in the de novo pyrimidine nucleotide biosynthesis pathway. The polypeptide is Aspartate carbamoyltransferase catalytic subunit (Beijerinckia indica subsp. indica (strain ATCC 9039 / DSM 1715 / NCIMB 8712)).